A 178-amino-acid polypeptide reads, in one-letter code: Large ribosomal subunit protein uL6 (178 aa).

This sequence belongs to the universal ribosomal protein uL6 family. As to quaternary structure, part of the 50S ribosomal subunit.

Functionally, this protein binds to the 23S rRNA, and is important in its secondary structure. It is located near the subunit interface in the base of the L7/L12 stalk, and near the tRNA binding site of the peptidyltransferase center. This is Large ribosomal subunit protein uL6 from Corynebacterium aurimucosum (strain ATCC 700975 / DSM 44827 / CIP 107346 / CN-1) (Corynebacterium nigricans).